The chain runs to 207 residues: Urease accessory protein UreG (207 aa).

12-19 (GPVGAGKT) serves as a coordination point for GTP.

The protein belongs to the SIMIBI class G3E GTPase family. UreG subfamily. As to quaternary structure, homodimer. UreD, UreF and UreG form a complex that acts as a GTP-hydrolysis-dependent molecular chaperone, activating the urease apoprotein by helping to assemble the nickel containing metallocenter of UreC. The UreE protein probably delivers the nickel.

It is found in the cytoplasm. Functionally, facilitates the functional incorporation of the urease nickel metallocenter. This process requires GTP hydrolysis, probably effectuated by UreG. This is Urease accessory protein UreG from Cereibacter sphaeroides (strain ATCC 17025 / ATH 2.4.3) (Rhodobacter sphaeroides).